We begin with the raw amino-acid sequence, 308 residues long: L-lactate dehydrogenase 2 (308 aa).

Residues V14, D35, Y65, and 79-80 (GA) contribute to the NAD(+) site. R88 provides a ligand contact to substrate. Residue S101 participates in NAD(+) binding. Substrate is bound at residue 120-123 (NPVD). T143 lines the NAD(+) pocket. Residue 148-151 (DTAR) coordinates substrate. H175 acts as the Proton acceptor in catalysis. A substrate-binding site is contributed by T225.

This sequence belongs to the LDH/MDH superfamily. LDH family. Homotetramer.

Its subcellular location is the cytoplasm. The enzyme catalyses (S)-lactate + NAD(+) = pyruvate + NADH + H(+). Its pathway is fermentation; pyruvate fermentation to lactate; (S)-lactate from pyruvate: step 1/1. Functionally, catalyzes the conversion of lactate to pyruvate. The chain is L-lactate dehydrogenase 2 from Lactobacillus johnsonii (strain CNCM I-12250 / La1 / NCC 533).